The following is a 279-amino-acid chain: Beta-lactamase (279 aa).

Positions 1 to 21 (MRYVRLCVISLLATLPLVVYA) are cleaved as a signal peptide. Residue S66 is the Acyl-ester intermediate of the active site. Cysteines 73 and 119 form a disulfide. 230–232 (KTG) provides a ligand contact to substrate.

Belongs to the class-A beta-lactamase family.

The catalysed reaction is a beta-lactam + H2O = a substituted beta-amino acid. In Klebsiella pneumoniae, this protein is Beta-lactamase.